A 218-amino-acid chain; its full sequence is ATP synthase subunit a (218 aa).

Transmembrane regions (helical) follow at residues 17 to 37, 75 to 95, 104 to 124, 162 to 184, and 196 to 216; these read IYST…GIFL, YLPL…SWFI, DLST…IFGI, LFGN…PFLL, and GTIQ…NFVH.

This sequence belongs to the ATPase A chain family. F-type ATPases have 2 components, CF(1) - the catalytic core - and CF(0) - the membrane proton channel. CF(1) has five subunits: alpha(3), beta(3), gamma(1), delta(1), epsilon(1). CF(0) has three main subunits: a(1), b(2) and c(9-12). The alpha and beta chains form an alternating ring which encloses part of the gamma chain. CF(1) is attached to CF(0) by a central stalk formed by the gamma and epsilon chains, while a peripheral stalk is formed by the delta and b chains. In this bacterium the a and b subunits are transcribed but do not seem to be translated, thus the ATP synthase consists of the alpha, beta, gamma, delta, epsilon and c subunits.

Its subcellular location is the cell membrane. Functionally, key component of the proton channel; it plays a direct role in the translocation of protons across the membrane. The chain is ATP synthase subunit a from Moorella thermoacetica (strain ATCC 39073 / JCM 9320).